A 94-amino-acid chain; its full sequence is MFTINAEVRKEQGKGASRRLRAANKFPAIIYGGKEAPLAVELDHDKVMNMQVKAEFYSEVLTIVVDGKEIKVKAQDVQRHPYKPKLLHIDFVRA.

This sequence belongs to the bacterial ribosomal protein bL25 family. Part of the 50S ribosomal subunit; part of the 5S rRNA/L5/L18/L25 subcomplex. Contacts the 5S rRNA. Binds to the 5S rRNA independently of L5 and L18.

In terms of biological role, this is one of the proteins that binds to the 5S RNA in the ribosome where it forms part of the central protuberance. In Escherichia coli O6:K15:H31 (strain 536 / UPEC), this protein is Large ribosomal subunit protein bL25.